Reading from the N-terminus, the 173-residue chain is Adenine phosphoribosyltransferase (173 aa).

It belongs to the purine/pyrimidine phosphoribosyltransferase family. As to quaternary structure, homodimer.

The protein resides in the cytoplasm. The catalysed reaction is AMP + diphosphate = 5-phospho-alpha-D-ribose 1-diphosphate + adenine. It functions in the pathway purine metabolism; AMP biosynthesis via salvage pathway; AMP from adenine: step 1/1. Functionally, catalyzes a salvage reaction resulting in the formation of AMP, that is energically less costly than de novo synthesis. This Thermoanaerobacter pseudethanolicus (strain ATCC 33223 / 39E) (Clostridium thermohydrosulfuricum) protein is Adenine phosphoribosyltransferase.